Consider the following 403-residue polypeptide: Aromatic-L-amino-acid decarboxylase (403 aa).

Threonine 8 lines the substrate pocket. Pyridoxal 5'-phosphate is bound by residues alanine 74 and serine 75. Residue histidine 118 coordinates substrate. Histidine 118 is a catalytic residue. Positions 197 and 226 each coordinate pyridoxal 5'-phosphate. Lysine 229 bears the N6-(pyridoxal phosphate)lysine mark. The disordered stretch occupies residues 250–276 (NAFNVDPLYLKHDMQGSAPDYRHWQIP).

The protein belongs to the group II decarboxylase family. As to quaternary structure, homodimer. The cofactor is pyridoxal 5'-phosphate.

It carries out the reaction L-dopa + H(+) = dopamine + CO2. The enzyme catalyses 5-hydroxy-L-tryptophan + H(+) = serotonin + CO2. Catalyzes the decarboxylation of L-3,4-dihydroxyphenylalanine (L-DOPA) to dopamine and L-5-hydroxytryptophan (5-HTP) to serotonin. Catalyzes the formation of serotonin more efficiently than dopamine. Displays no activity to tyrosine. Variation in the synthesis of bioamines may be a factor contributing to natural variation in life span. This Drosophila lebanonensis (Fruit fly) protein is Aromatic-L-amino-acid decarboxylase (Ddc).